A 497-amino-acid chain; its full sequence is Guanosine-5'-triphosphate,3'-diphosphate pyrophosphatase (497 aa).

It belongs to the GppA/Ppx family. GppA subfamily.

It carries out the reaction guanosine 3'-diphosphate 5'-triphosphate + H2O = guanosine 3',5'-bis(diphosphate) + phosphate + H(+). Its pathway is purine metabolism; ppGpp biosynthesis; ppGpp from GTP: step 2/2. Catalyzes the conversion of pppGpp to ppGpp. Guanosine pentaphosphate (pppGpp) is a cytoplasmic signaling molecule which together with ppGpp controls the 'stringent response', an adaptive process that allows bacteria to respond to amino acid starvation, resulting in the coordinated regulation of numerous cellular activities. This Aliivibrio fischeri (strain ATCC 700601 / ES114) (Vibrio fischeri) protein is Guanosine-5'-triphosphate,3'-diphosphate pyrophosphatase.